A 684-amino-acid chain; its full sequence is MSAKDFLVELGTEELPPKALKSLGDAFLAGIEKGLKAAGLNYAASRVYAAPRRLAVLVEQLEEQQADRSMNLDGPPIQAAFDADGNPTQAALGFARKCGVDIAEIDRSGAKLRFAQHIPGQPAVNLLPTIVQDSLNDLPIPKRMRWAARRDEFVRPTQWLVMLFGDAVVDCEILAQKAGRVSRGHRFHANREVRISSPANYAEDLRSAYVLADFAERREIISRRVDELAAAEQGTAIVPPALLDEVTALVEWPVPLVCSFEERFLEVPQEALISTMQDNQKYFCLLDAGGKLLPRFITVANIESKDPAQIVSGNEKVVRPRLTDAEFFFKQDKKQKLEGFNQRLANVVFQAQLGSVFDKAQRVSALAGFIAREVGGDEARAARAGLLSKCDLATEMVGEFPEMQGIAGYYYALNDGEPQDVALALNEQYMPRGAGAELPSTLTGAAVAVADKLDTLVGIFGIGMLPTGSKDPYALRRAALGVLRILIEKGLDLDLAAAVDFAVAQYAGKVKSDGLAAQVLEFIFDRLRARYEDEGIEVAVYQAVRAVNPTSPLDFDQRVQAVQAFRKLPQAEALAAANKRVSNLLSKAEGGVAAQVEAHYFDNPSEFALHAAIQQADQAVQPLAAARQYNEALAKLASLREPVDAFFEAVLVNAEDARVRANRYALLARLRGLFLGVADISVLG.

This sequence belongs to the class-II aminoacyl-tRNA synthetase family. Tetramer of two alpha and two beta subunits.

The protein localises to the cytoplasm. The catalysed reaction is tRNA(Gly) + glycine + ATP = glycyl-tRNA(Gly) + AMP + diphosphate. The polypeptide is Glycine--tRNA ligase beta subunit (Ectopseudomonas mendocina (strain ymp) (Pseudomonas mendocina)).